Reading from the N-terminus, the 631-residue chain is MSATKLTRREQRARAQHFIDTLEGTAFPNSKRIYITGTQPGVRVPMREIQLSPTLIGGSKEQPQYEENEAIPVYDTSGPYGDPQIAINVQQGLAKLRQPWIDARGDTEELTVRSSDYTKARLAYDGLDELRFSGVLTPKRAKAGRRVTQLHYARQGIITPEMEFIAIRENMGRERIRSEVLRHQHSGMSFGARLPENITAESVRDEVAAGRAIIPANINHPESEPMIIGRNFLVKVNANIGNSAVTSSIEEEVEKLVWSTRWGADTVMDLSTGRYIHETREWILRNSPVPIGTVPIYQALEKVNGIAEDLTWEAFRDTLLEQAEQGVDYFTIHAGVLLRYVPMTAKRLTGIVSRGGSIMAKWCLSHHQENFLYQHFREICEICAAYDVSLSLGDGLRPGSIQDANDEAQFAELHTLGELTKIAWEYDVQVMIEGPGHVPMQMIRRNMTEELEHCHEAPFYTLGPLTTDIAPGYDHFTSGIGAAMIGWFGCAMLCYVTPKEHLGLPNKEDVKQGLITYKIAAHAADLAKGHPGAQIRDNAMSKARFEFRWEDQFNLALDPFTARTYHDETLPQESGKVAHFCSMCGPKFCSMKISQEVRDYAAAQTIEVGMADMSENFRARGGEIYLRKEEA.

Substrate contacts are provided by residues Asn239, Met268, Tyr297, His333, 353-355 (SRG), 394-397 (DGLR), and Glu433. Residue His437 coordinates Zn(2+). Tyr460 lines the substrate pocket. His501 lines the Zn(2+) pocket. Residues Cys581, Cys584, and Cys589 each contribute to the [4Fe-4S] cluster site.

The protein belongs to the ThiC family. In terms of assembly, homodimer. It depends on [4Fe-4S] cluster as a cofactor.

The catalysed reaction is 5-amino-1-(5-phospho-beta-D-ribosyl)imidazole + S-adenosyl-L-methionine = 4-amino-2-methyl-5-(phosphooxymethyl)pyrimidine + CO + 5'-deoxyadenosine + formate + L-methionine + 3 H(+). It participates in cofactor biosynthesis; thiamine diphosphate biosynthesis. Its function is as follows. Catalyzes the synthesis of the hydroxymethylpyrimidine phosphate (HMP-P) moiety of thiamine from aminoimidazole ribotide (AIR) in a radical S-adenosyl-L-methionine (SAM)-dependent reaction. This Shigella dysenteriae serotype 1 (strain Sd197) protein is Phosphomethylpyrimidine synthase.